Reading from the N-terminus, the 127-residue chain is Large ribosomal subunit protein bL20 (127 aa).

This sequence belongs to the bacterial ribosomal protein bL20 family.

Its function is as follows. Binds directly to 23S ribosomal RNA and is necessary for the in vitro assembly process of the 50S ribosomal subunit. It is not involved in the protein synthesizing functions of that subunit. The polypeptide is Large ribosomal subunit protein bL20 (Corynebacterium jeikeium (strain K411)).